A 660-amino-acid chain; its full sequence is CXXC-type zinc finger protein 1 (660 aa).

Met-1 is modified (N-acetylmethionine). A compositionally biased stretch (acidic residues) spans Met-1 to Gly-14. The segment at Met-1–Glu-20 is disordered. Phosphoserine is present on residues Ser-6 and Ser-19. The segment at Tyr-28–Lys-76 adopts a PHD-type zinc-finger fold. Basic and acidic residues predominate over residues Glu-91–Arg-120. Positions Glu-91–Ile-166 are disordered. Ser-124 is subject to Phosphoserine. The CXXC-type zinc finger occupies Gln-164–Gln-213. Positions 173, 176, 179, 185, 188, 191, 207, and 212 each coordinate Zn(2+). Disordered regions lie at residues Phe-223–Asp-287 and Ala-328–Ser-375. Ser-228 bears the Phosphoserine mark. Position 231 is a phosphothreonine (Thr-231). Lys-254 participates in a covalent cross-link: Glycyl lysine isopeptide (Lys-Gly) (interchain with G-Cter in SUMO2). Residues Ala-328–Glu-338 are compositionally biased toward basic residues. The span at Lys-339–Tyr-349 shows a compositional bias: basic and acidic residues. Over residues Lys-350–Trp-362 the composition is skewed to basic residues. Residues Lys-363–Asp-372 are compositionally biased toward basic and acidic residues. Residues Ala-426–Asn-479 are a coiled coil.

As to quaternary structure, component of the SET1 complex, at least composed of the catalytic subunit (SETD1A or SETD1B), WDR5, WDR82, RBBP5, ASH2L/ASH2, CXXC1/CFP1, HCFC1 and DPY30. Interacts with SETD1A. Interacts with ZNF335. Interacts with PRDM9; this interaction does not link PRDM9-activated recombination hotspot sites with DSB machinery and is not required for the hotspot recognition pathway. Interacts with histone H3K4me3. Expressed in seminiferous tubules and in both germ cells and Sertoli cells. Highly expressed in spermatogonia, weakly expressed in leptonema and zygonema, and then again high expression in pachynema and diplonema, decreasing to undetectable levels in spermatids.

The protein localises to the nucleus speckle. It is found in the nucleus. Its function is as follows. Transcriptional activator that exhibits a unique DNA binding specificity for CpG unmethylated motifs with a preference for CpGG. This chain is CXXC-type zinc finger protein 1 (Cxxc1), found in Mus musculus (Mouse).